Consider the following 127-residue polypeptide: Aspartate 1-decarboxylase (127 aa).

Ser-25 serves as the catalytic Schiff-base intermediate with substrate; via pyruvic acid. Pyruvic acid (Ser) is present on Ser-25. Thr-57 is a binding site for substrate. The Proton donor role is filled by Tyr-58. 73–75 (GAA) is a binding site for substrate.

Belongs to the PanD family. As to quaternary structure, heterooctamer of four alpha and four beta subunits. The cofactor is pyruvate. Is synthesized initially as an inactive proenzyme, which is activated by self-cleavage at a specific serine bond to produce a beta-subunit with a hydroxyl group at its C-terminus and an alpha-subunit with a pyruvoyl group at its N-terminus.

It localises to the cytoplasm. The enzyme catalyses L-aspartate + H(+) = beta-alanine + CO2. Its pathway is cofactor biosynthesis; (R)-pantothenate biosynthesis; beta-alanine from L-aspartate: step 1/1. Catalyzes the pyruvoyl-dependent decarboxylation of aspartate to produce beta-alanine. The protein is Aspartate 1-decarboxylase of Bacillus cereus (strain ATCC 10987 / NRS 248).